Consider the following 295-residue polypeptide: Maintenance of mitochondrial morphology protein 1 (295 aa).

Topologically, residues 1-12 (MVQLFHLTFTQG) are lumenal. Residues 13 to 33 (FFIGQLSVIVIVYIFLRFFLF) traverse the membrane as a helical segment. The Cytoplasmic portion of the chain corresponds to 34-295 (CTKEELKNVQ…REGHRQKSTE (262 aa)). Residues 81-278 (EEESLDWFNV…SPQFQQISIP (198 aa)) enclose the SMP-LTD domain.

This sequence belongs to the MMM1 family. As to quaternary structure, homodimer. Component of the ER-mitochondria encounter structure (ERMES) or MDM complex, composed of mmm1, mdm10, mdm12 and mdm34. A mmm1 homodimer associates with one molecule of mdm12 on each side in a pairwise head-to-tail manner, and the SMP-LTD domains of mmm1 and mdm12 generate a continuous hydrophobic tunnel for phospholipid trafficking.

The protein resides in the endoplasmic reticulum membrane. In terms of biological role, component of the ERMES/MDM complex, which serves as a molecular tether to connect the endoplasmic reticulum (ER) and mitochondria. Components of this complex are involved in the control of mitochondrial shape and protein biogenesis, and function in nonvesicular lipid trafficking between the ER and mitochondria. The mdm12-mmm1 subcomplex functions in the major beta-barrel assembly pathway that is responsible for biogenesis of all outer membrane beta-barrel proteins, and acts in a late step after the SAM complex. The mdm10-mdm12-mmm1 subcomplex further acts in the TOM40-specific pathway after the action of the mdm12-mmm1 complex. Essential for establishing and maintaining the structure of mitochondria and maintenance of mtDNA nucleoids. This is Maintenance of mitochondrial morphology protein 1 from Schizosaccharomyces japonicus (strain yFS275 / FY16936) (Fission yeast).